A 269-amino-acid chain; its full sequence is MTKSLFDVLKELDSLVDFSRAKLQWDILIILATKGPSSTTEISQTINTSRKSIIDAIRKLVDKELVTKVKHDIYGLSDKGKELWNKIDSVLNIEVINGNNHKGQSKDEDILALENLSQYFYLINLSKMITINHDGLSLDKAARELGVSRQTLKYYLELFEEKKLFRVIGKRTHFKKNIYKCVLMNEGKRLLFRLPEFTKMKNNLPLKLLLRLTNSYTLEMANVKVMGFILISLPLLMYFRDQLGLIELPWLYAVIFLALLSVFAQILSR.

Topologically, residues 1–218 are cytoplasmic; the sequence is MTKSLFDVLK…LLRLTNSYTL (218 aa). The segment at residues 39-62 is a DNA-binding region (H-T-H motif); it reads TTEISQTINTSRKSIIDAIRKLVD. The helical transmembrane segment at 219 to 239 threads the bilayer; sequence EMANVKVMGFILISLPLLMYF. At 240-242 the chain is on the extracellular side; that stretch reads RDQ. A helical membrane pass occupies residues 243–263; sequence LGLIELPWLYAVIFLALLSVF. Over 264-269 the chain is Cytoplasmic; sequence AQILSR.

It localises to the cell membrane. In terms of biological role, involved in regulation of archaellar gene expression. Activates flaB transcription upon nutrient starvation by acting on the flaB promoter. The sequence is that of HTH-type transcriptional activator ArnR from Sulfolobus acidocaldarius (strain ATCC 33909 / DSM 639 / JCM 8929 / NBRC 15157 / NCIMB 11770).